The primary structure comprises 181 residues: GTPase RhebL1 (181 aa).

GTP-binding positions include 30–36 (LEDYDPT), Gly61, 117–120 (NKAD), and 147–148 (SA). The short motif at 33–41 (YDPTVENTY) is the Effector region element. Residue Thr36 participates in Mg(2+) binding. At Cys178 the chain carries Cysteine methyl ester. Cys178 carries the S-farnesyl cysteine lipid modification. Residues 179 to 181 (HLM) constitute a propeptide, removed in mature form.

This sequence belongs to the small GTPase superfamily. Rheb family. Interacts with MTOR.

The protein resides in the endomembrane system. It localises to the cytoplasm. The catalysed reaction is GTP + H2O = GDP + phosphate + H(+). Functionally, binds GTP and exhibits intrinsic GTPase activity. May activate NF-kappa-B-mediated gene transcription. Promotes signal transduction through MTOR, activates RPS6KB1, and is a downstream target of the small GTPase-activating proteins TSC1 and TSC2. This chain is GTPase RhebL1 (RHEBL1), found in Bos taurus (Bovine).